We begin with the raw amino-acid sequence, 331 residues long: Biotin synthase (331 aa).

Residues 48–278 (FDSQKFEFCS…SAELRLCGGR (231 aa)) form the Radical SAM core domain. [4Fe-4S] cluster-binding residues include Cys-66, Cys-70, and Cys-73. Cys-110, Cys-143, Cys-203, and Arg-273 together coordinate [2Fe-2S] cluster.

This sequence belongs to the radical SAM superfamily. Biotin synthase family. As to quaternary structure, homodimer. [4Fe-4S] cluster serves as cofactor. [2Fe-2S] cluster is required as a cofactor.

The enzyme catalyses (4R,5S)-dethiobiotin + (sulfur carrier)-SH + 2 reduced [2Fe-2S]-[ferredoxin] + 2 S-adenosyl-L-methionine = (sulfur carrier)-H + biotin + 2 5'-deoxyadenosine + 2 L-methionine + 2 oxidized [2Fe-2S]-[ferredoxin]. It participates in cofactor biosynthesis; biotin biosynthesis; biotin from 7,8-diaminononanoate: step 2/2. Catalyzes the conversion of dethiobiotin (DTB) to biotin by the insertion of a sulfur atom into dethiobiotin via a radical-based mechanism. The sequence is that of Biotin synthase from Hydrogenobaculum sp. (strain Y04AAS1).